Consider the following 208-residue polypeptide: Uracil phosphoribosyltransferase (208 aa).

5-phospho-alpha-D-ribose 1-diphosphate is bound by residues Arg78, Arg103, and 130 to 138; that span reads DPMLATGVS. Residues Ile193 and 198–200 each bind uracil; that span reads GDA. Asp199 is a binding site for 5-phospho-alpha-D-ribose 1-diphosphate.

The protein belongs to the UPRTase family. The cofactor is Mg(2+).

It carries out the reaction UMP + diphosphate = 5-phospho-alpha-D-ribose 1-diphosphate + uracil. It participates in pyrimidine metabolism; UMP biosynthesis via salvage pathway; UMP from uracil: step 1/1. Its activity is regulated as follows. Allosterically activated by GTP. Catalyzes the conversion of uracil and 5-phospho-alpha-D-ribose 1-diphosphate (PRPP) to UMP and diphosphate. The sequence is that of Uracil phosphoribosyltransferase from Thermosipho melanesiensis (strain DSM 12029 / CIP 104789 / BI429).